Consider the following 246-residue polypeptide: 1-(5-phosphoribosyl)-5-[(5-phosphoribosylamino)methylideneamino] imidazole-4-carboxamide isomerase (246 aa).

D7 serves as the catalytic Proton acceptor. Catalysis depends on D129, which acts as the Proton donor.

Belongs to the HisA/HisF family.

The protein resides in the cytoplasm. The catalysed reaction is 1-(5-phospho-beta-D-ribosyl)-5-[(5-phospho-beta-D-ribosylamino)methylideneamino]imidazole-4-carboxamide = 5-[(5-phospho-1-deoxy-D-ribulos-1-ylimino)methylamino]-1-(5-phospho-beta-D-ribosyl)imidazole-4-carboxamide. It functions in the pathway amino-acid biosynthesis; L-histidine biosynthesis; L-histidine from 5-phospho-alpha-D-ribose 1-diphosphate: step 4/9. The sequence is that of 1-(5-phosphoribosyl)-5-[(5-phosphoribosylamino)methylideneamino] imidazole-4-carboxamide isomerase from Buchnera aphidicola subsp. Acyrthosiphon pisum (strain Tuc7).